The chain runs to 127 residues: Large ribosomal subunit protein bL12 (127 aa).

This sequence belongs to the bacterial ribosomal protein bL12 family. In terms of assembly, homodimer. Part of the ribosomal stalk of the 50S ribosomal subunit. Forms a multimeric L10(L12)X complex, where L10 forms an elongated spine to which 2 to 4 L12 dimers bind in a sequential fashion. Binds GTP-bound translation factors.

Forms part of the ribosomal stalk which helps the ribosome interact with GTP-bound translation factors. Is thus essential for accurate translation. The polypeptide is Large ribosomal subunit protein bL12 (Symbiobacterium thermophilum (strain DSM 24528 / JCM 14929 / IAM 14863 / T)).